The sequence spans 365 residues: Phospho-N-acetylmuramoyl-pentapeptide-transferase (365 aa).

Helical transmembrane passes span 22–42 (YVSVRIIMISITSLLITLFLG), 74–94 (TMGGVLILSSVIISALLWGSL), 95–115 (SSIYLWILILVVIFFGAIGFF), 134–154 (KFALQSIFSIILAIVLFYLLS), 169–189 (LHIPMGIFLFVVLTFFIINGS), 201–221 (GLAIVPVVLVAAGLGIYAYIQ), 240–260 (LAEVAVFCAALCGSGLAFLWF), 268–288 (FMGDVGSLTLGAVLGVIAVMI), 292–312 (LIFFIMGLLFVVEALSVMLQV), and 342–362 (KVVIRFWIVSLILFLIGLVAI).

This sequence belongs to the glycosyltransferase 4 family. MraY subfamily. It depends on Mg(2+) as a cofactor.

The protein localises to the cell inner membrane. It catalyses the reaction UDP-N-acetyl-alpha-D-muramoyl-L-alanyl-gamma-D-glutamyl-meso-2,6-diaminopimeloyl-D-alanyl-D-alanine + di-trans,octa-cis-undecaprenyl phosphate = di-trans,octa-cis-undecaprenyl diphospho-N-acetyl-alpha-D-muramoyl-L-alanyl-D-glutamyl-meso-2,6-diaminopimeloyl-D-alanyl-D-alanine + UMP. It functions in the pathway cell wall biogenesis; peptidoglycan biosynthesis. Functionally, catalyzes the initial step of the lipid cycle reactions in the biosynthesis of the cell wall peptidoglycan: transfers peptidoglycan precursor phospho-MurNAc-pentapeptide from UDP-MurNAc-pentapeptide onto the lipid carrier undecaprenyl phosphate, yielding undecaprenyl-pyrophosphoryl-MurNAc-pentapeptide, known as lipid I. This Francisella philomiragia subsp. philomiragia (strain ATCC 25017 / CCUG 19701 / FSC 153 / O#319-036) protein is Phospho-N-acetylmuramoyl-pentapeptide-transferase.